Here is a 152-residue protein sequence, read N- to C-terminus: Ribonuclease pancreatic gamma-type (152 aa).

Positions 1 to 25 are cleaved as a signal peptide; sequence MGLEKSFILFSLLVLVLGCVQPSLV. Positions 26-48 are disordered; the sequence is GESKESPSEKFKRRHMDEEGPYQ. Positions 27–43 are enriched in basic and acidic residues; that stretch reads ESKESPSEKFKRRHMDE. Substrate is bound by residues Lys-35 and Arg-38. The Proton acceptor role is filled by His-40. Cystine bridges form between Cys-54–Cys-112, Cys-68–Cys-123, Cys-86–Cys-138, and Cys-93–Cys-100. Residues 69 to 73 and Lys-94 each bind substrate; that span reads KPLNT. The Proton donor role is filled by His-147.

This sequence belongs to the pancreatic ribonuclease family. Monomer.

Its subcellular location is the secreted. It catalyses the reaction an [RNA] containing cytidine + H2O = an [RNA]-3'-cytidine-3'-phosphate + a 5'-hydroxy-ribonucleotide-3'-[RNA].. The catalysed reaction is an [RNA] containing uridine + H2O = an [RNA]-3'-uridine-3'-phosphate + a 5'-hydroxy-ribonucleotide-3'-[RNA].. Endonuclease that catalyzes the cleavage of RNA on the 3' side of pyrimidine nucleotides. Acts on single-stranded and double-stranded RNA. The protein is Ribonuclease pancreatic gamma-type of Rattus fuscipes (Bush rat).